Here is a 346-residue protein sequence, read N- to C-terminus: 3 beta-hydroxysteroid dehydrogenase/Delta 5--&gt;4-isomerase (346 aa).

Tyr-147 (proton acceptor) is an active-site residue. NAD(+) is bound at residue Lys-151.

This sequence belongs to the 3-beta-HSD family.

The enzyme catalyses a 3beta-hydroxy-Delta(5)-steroid + NAD(+) = a 3-oxo-Delta(5)-steroid + NADH + H(+). The catalysed reaction is a 3-oxo-Delta(5)-steroid = a 3-oxo-Delta(4)-steroid. It participates in lipid metabolism; steroid biosynthesis. In terms of biological role, catalyzes the oxidative conversion of Delta(5)-ene-3-beta-hydroxy steroid, and the oxidative conversion of ketosteroids. The 3-beta-HSD enzymatic system plays a crucial role in the biosynthesis of all classes of hormonal steroids. During viral infection, steroid production contributes to virulence by inhibiting the host inflammatory response. In Homo sapiens (Human), this protein is 3 beta-hydroxysteroid dehydrogenase/Delta 5--&gt;4-isomerase (OPG174).